We begin with the raw amino-acid sequence, 316 residues long: Epiphycan (316 aa).

An N-terminal signal peptide occupies residues 1–23 (MKTFVNIFLGFFIFESVGAVPIT). Serine 98 carries an O-linked (Xyl...) (dermatan sulfate) serine glycan. In terms of domain architecture, LRRNT spans 100–137 (VLVPQTQDGLPTCLLCTCLGTTVYCDDRELDAVPPLPK). A disulfide bond links cysteine 112 and cysteine 124. LRR repeat units follow at residues 138–159 (NTMYFYSRYNRIRKINKNDFAN), 162–183 (NLKRIDLTANLISEIHEDAFRR), 186–207 (QLLELVLRDNRIRQLPELPSTL), 232–252 (ELQHLYITDNNLDHVPLPLPE), 253–274 (SLQALHLQNNNIQEMHEDTFCK), and 284–304 (ALEDIRLDGNPINLSKTPYAY). The cysteines at positions 273 and 306 are disulfide-linked. A glycan (N-linked (GlcNAc...) asparagine) is linked at asparagine 296.

This sequence belongs to the small leucine-rich proteoglycan (SLRP) family. SLRP class III subfamily. The O-linked glycosaminoglycan chain(s) are dermatan sulfate. Preferentially expressed in flattened chondrocytes of developing chick limb cartilage. Also found in the cartilage peripheral zone bordering with bone marrow cavity.

Its subcellular location is the secreted. The protein resides in the extracellular space. It localises to the extracellular matrix. May have a role in bone formation and also in establishing the ordered structure of cartilage through matrix organization. The sequence is that of Epiphycan (EPYC) from Gallus gallus (Chicken).